Consider the following 352-residue polypeptide: MGLDDRLDRIVARSEELQAALAEGLVGEAFAKASREYAELEPIVDRIGELRLAEQEERQSQALLADPEMRELAEAELEDLRARIPVLRQDIRIAMLPRDEADERSAILEIRPAAGGDEAALFAAELFDAYRRYAALRGWRFEIMEFDESELGGLREGIANITGRGVFARLKYESGVHRVQRVPATESQGRIHTSTVTVAVLPEAGDVDVQINDGDLRIDVYRASGAGGQHVNKTESAVRITHLPTGLVVAMQEEKSQHKNRAKAMKILMARLYERERAAAHATRAADRKSQVGTGDRSERIRTYNFPQGRVTDHRINLTAYKIDRVMMGEFDEFVDALTQDEQASLLAAEGL.

Residue glutamine 229 is modified to N5-methylglutamine.

This sequence belongs to the prokaryotic/mitochondrial release factor family. Post-translationally, methylated by PrmC. Methylation increases the termination efficiency of RF1.

The protein localises to the cytoplasm. Functionally, peptide chain release factor 1 directs the termination of translation in response to the peptide chain termination codons UAG and UAA. This chain is Peptide chain release factor 1, found in Gluconacetobacter diazotrophicus (strain ATCC 49037 / DSM 5601 / CCUG 37298 / CIP 103539 / LMG 7603 / PAl5).